A 217-amino-acid chain; its full sequence is Cytidylate kinase (217 aa).

9 to 17 (GPAGAGKST) lines the ATP pocket.

Belongs to the cytidylate kinase family. Type 1 subfamily.

The protein localises to the cytoplasm. It carries out the reaction CMP + ATP = CDP + ADP. The catalysed reaction is dCMP + ATP = dCDP + ADP. The chain is Cytidylate kinase from Clostridium acetobutylicum (strain ATCC 824 / DSM 792 / JCM 1419 / IAM 19013 / LMG 5710 / NBRC 13948 / NRRL B-527 / VKM B-1787 / 2291 / W).